The chain runs to 178 residues: Caveolin-1 (178 aa).

Ser-2 bears the N-acetylserine mark. Ser-2 carries the post-translational modification Phosphoserine. A required for homooligomerization region spans residues 2-94 (SGGKYVDSEG…WKASFTTFTV (93 aa)). Residues 2–104 (SGGKYVDSEG…TKYWFYRLLS (103 aa)) are Cytoplasmic-facing. Lys-5 bears the N6-acetyllysine; alternate mark. Lys-5 participates in a covalent cross-link: Glycyl lysine isopeptide (Lys-Gly) (interchain with G-Cter in ubiquitin); alternate. Tyr-6 bears the Phosphotyrosine mark. The residue at position 9 (Ser-9) is a Phosphoserine. Tyr-14 bears the Phosphotyrosine; by ABL1 mark. Tyr-25 is modified (phosphotyrosine). Glycyl lysine isopeptide (Lys-Gly) (interchain with G-Cter in ubiquitin) cross-links involve residues Lys-26, Lys-30, Lys-39, Lys-47, and Lys-57. The interval 82-94 (DGIWKASFTTFTV) is interaction with CAVIN3. An intramembrane region (helical) is located at residues 105–125 (ALFGIPMALIWGIYFAILSFL). At 126 to 178 (HIWAVVPCIKSFLIEIQCISRVYSIYVHTFCDPFFEAVGKIFSNIRINMQKEI) the chain is on the cytoplasmic side. The interval 131–142 (VPCIKSFLIEIQ) is interacts with SPRY1, SPRY2, SPRY3 and SPRY4. S-palmitoyl cysteine attachment occurs at residues Cys-133, Cys-143, and Cys-156. The interval 149–160 (SIYVHTFCDPFF) is interacts with SPRY1, SPRY2, and SPRY4. The interval 167 to 178 (FSNIRINMQKEI) is interacts with SPRY1, SPRY2, SPRY3 and SPRY4.

Belongs to the caveolin family. In terms of assembly, homooligomer. Interacts with GLIPR2. Interacts with NOSTRIN. Interacts with SNAP25 and STX1A. Interacts (via the N-terminus) with DPP4; the interaction is direct. Interacts with CTNNB1, CDH1 and JUP. Interacts with PACSIN2; this interaction induces membrane tubulation. Interacts with SLC7A9. Interacts with BMX and BTK. Interacts with TGFBR1. Interacts with CAVIN3 (via leucine-zipper domain) in a cholesterol-sensitive manner. Interacts with CAVIN1. Interacts with EHD2 in a cholesterol-dependent manner. Forms a ternary complex with UBXN6 and VCP; mediates CAV1 targeting to lysosomes for degradation. Interacts with ABCG1; this interaction regulates ABCG1-mediated cholesterol efflux. Interacts with NEU3; this interaction enhances NEU3 sialidase activity within caveola. Interacts (via C-terminus) with SPRY1, SPRY2 (via C-terminus), SPRY3, and SPRY4. Interacts with IGFBP5; this interaction allows trafficking of IGFBP5 from the plasma membrane to the nucleus. Post-translationally, phosphorylated at Tyr-14 by ABL1 in response to oxidative stress. Ubiquitinated. Undergo monoubiquitination and multi- and/or polyubiquitination. Monoubiquitination of N-terminal lysines promotes integration in a ternary complex with UBXN6 and VCP which promotes oligomeric CAV1 targeting to lysosomes for degradation. Ubiquitinated by ZNRF1; leading to degradation and modulation of the TLR4-mediated immune response.

Its subcellular location is the golgi apparatus membrane. The protein localises to the cell membrane. The protein resides in the membrane. It is found in the caveola. It localises to the membrane raft. Functionally, may act as a scaffolding protein within caveolar membranes. Forms a stable heterooligomeric complex with CAV2 that targets to lipid rafts and drives caveolae formation. Mediates the recruitment of CAVIN proteins (CAVIN1/2/3/4) to the caveolae. Interacts directly with G-protein alpha subunits and can functionally regulate their activity. Involved in the costimulatory signal essential for T-cell receptor (TCR)-mediated T-cell activation. Its binding to DPP4 induces T-cell proliferation and NF-kappa-B activation in a T-cell receptor/CD3-dependent manner. Recruits CTNNB1 to caveolar membranes and may regulate CTNNB1-mediated signaling through the Wnt pathway. Negatively regulates TGFB1-mediated activation of SMAD2/3 by mediating the internalization of TGFBR1 from membrane rafts leading to its subsequent degradation. Binds 20(S)-hydroxycholesterol (20(S)-OHC). The protein is Caveolin-1 (CAV1) of Felis catus (Cat).